Reading from the N-terminus, the 324-residue chain is Acetyl-coenzyme A carboxylase carboxyl transferase subunit alpha (324 aa).

The CoA carboxyltransferase C-terminal domain maps to 37–291 (KLERRLDKLK…QNFILQEWLR (255 aa)).

Belongs to the AccA family. As to quaternary structure, acetyl-CoA carboxylase is a heterohexamer composed of biotin carboxyl carrier protein (AccB), biotin carboxylase (AccC) and two subunits each of ACCase subunit alpha (AccA) and ACCase subunit beta (AccD).

Its subcellular location is the cytoplasm. It catalyses the reaction N(6)-carboxybiotinyl-L-lysyl-[protein] + acetyl-CoA = N(6)-biotinyl-L-lysyl-[protein] + malonyl-CoA. It participates in lipid metabolism; malonyl-CoA biosynthesis; malonyl-CoA from acetyl-CoA: step 1/1. Its function is as follows. Component of the acetyl coenzyme A carboxylase (ACC) complex. First, biotin carboxylase catalyzes the carboxylation of biotin on its carrier protein (BCCP) and then the CO(2) group is transferred by the carboxyltransferase to acetyl-CoA to form malonyl-CoA. This Chlamydia caviae (strain ATCC VR-813 / DSM 19441 / 03DC25 / GPIC) (Chlamydophila caviae) protein is Acetyl-coenzyme A carboxylase carboxyl transferase subunit alpha.